The chain runs to 102 residues: Antimicrobial peptide 1 (102 aa).

The N-terminal stretch at M1–G26 is a signal peptide. Cystine bridges form between C37-C90, C47-C102, and C49-C75.

It is found in the secreted. Antimicrobial peptide which inhibits the growth of a variety of fungi, oomycetes, Gram-positive bacterial phytopatogenes and S.cerevisiae in vitro. No activity against E.coli. This is Antimicrobial peptide 1 from Macadamia integrifolia (Macadamia nut).